The chain runs to 60 residues: uncharacterized protein (60 aa).

This is an uncharacterized protein from Dryophytes versicolor (chameleon treefrog).